A 303-amino-acid chain; its full sequence is Ornithine carbamoyltransferase (303 aa).

Carbamoyl phosphate is bound by residues 52 to 55 (STRT), Gln-79, Arg-103, and 130 to 133 (HPCQ). L-ornithine contacts are provided by residues Asn-161, Asp-222, and 226–227 (SM). Carbamoyl phosphate contacts are provided by residues 262 to 263 (CL) and Arg-290.

The protein belongs to the aspartate/ornithine carbamoyltransferase superfamily. OTCase family.

The protein localises to the cytoplasm. The catalysed reaction is carbamoyl phosphate + L-ornithine = L-citrulline + phosphate + H(+). Its pathway is amino-acid biosynthesis; L-arginine biosynthesis; L-arginine from L-ornithine and carbamoyl phosphate: step 1/3. Functionally, reversibly catalyzes the transfer of the carbamoyl group from carbamoyl phosphate (CP) to the N(epsilon) atom of ornithine (ORN) to produce L-citrulline. In Geobacter sulfurreducens (strain ATCC 51573 / DSM 12127 / PCA), this protein is Ornithine carbamoyltransferase.